A 589-amino-acid chain; its full sequence is Protein NRT1/ PTR FAMILY 7.2 (589 aa).

2 helical membrane passes run 32–52 and 78–98; these read WLTA…FFGV and WTGT…SYWG. At T102 the chain carries Phosphothreonine. 10 helical membrane passes run 105 to 125, 147 to 167, 187 to 207, 217 to 237, 343 to 363, 377 to 397, 423 to 443, 464 to 484, 504 to 524, and 548 to 568; these read IFQA…GALL, VLFY…QPNI, IAFF…SNTV, WPLG…LFLI, IWLC…LFVV, IPAS…IFAY, MGIG…VEIH, IFWQ…MYVG, LCMA…SIVM, and FYFL…ICAK.

Belongs to the major facilitator superfamily. Proton-dependent oligopeptide transporter (POT/PTR) (TC 2.A.17) family. Expressed in xylem parenchyma cells within the vasculature. Expressed in siliques and flowers. Higher expression in shoots than in roots.

It localises to the cell membrane. In terms of biological role, low-affinity nitrate transporter. Involved in nitrate removal from xylem sap. Not involved in oligopeptides transport. This chain is Protein NRT1/ PTR FAMILY 7.2 (NPF7.2), found in Arabidopsis thaliana (Mouse-ear cress).